The following is a 262-amino-acid chain: 5'-nucleotidase SurE (262 aa).

Aspartate 11, aspartate 12, serine 43, and asparagine 101 together coordinate a divalent metal cation. Residues 220 to 229 show a composition bias toward basic and acidic residues; it reads SAGDGPKEWP. A disordered region spans residues 220-246; the sequence is SAGDGPKEWPSDVSQIETNSPSLTPIQ. The segment covering 231–244 has biased composition (polar residues); it reads DVSQIETNSPSLTP.

The protein belongs to the SurE nucleotidase family. The cofactor is a divalent metal cation.

It localises to the cytoplasm. The catalysed reaction is a ribonucleoside 5'-phosphate + H2O = a ribonucleoside + phosphate. In terms of biological role, nucleotidase that shows phosphatase activity on nucleoside 5'-monophosphates. This is 5'-nucleotidase SurE from Prochlorococcus marinus (strain SARG / CCMP1375 / SS120).